The sequence spans 483 residues: Probable pectate lyase 12 (483 aa).

The signal sequence occupies residues 1 to 24; that stretch reads MMLQRSCIVLFFSLFLLVPQMVFS. N-linked (GlcNAc...) asparagine glycans are attached at residues asparagine 27 and asparagine 50. Aspartate 220, aspartate 244, and aspartate 248 together coordinate Ca(2+). Arginine 300 is a catalytic residue.

This sequence belongs to the polysaccharide lyase 1 family. Ca(2+) is required as a cofactor.

The enzyme catalyses Eliminative cleavage of (1-&gt;4)-alpha-D-galacturonan to give oligosaccharides with 4-deoxy-alpha-D-galact-4-enuronosyl groups at their non-reducing ends.. It participates in glycan metabolism; pectin degradation; 2-dehydro-3-deoxy-D-gluconate from pectin: step 2/5. This is Probable pectate lyase 12 from Arabidopsis thaliana (Mouse-ear cress).